The primary structure comprises 338 residues: Tagatose 1,6-diphosphate aldolase (338 aa).

The protein belongs to the aldolase LacD family.

It carries out the reaction D-tagatofuranose 1,6-bisphosphate = D-glyceraldehyde 3-phosphate + dihydroxyacetone phosphate. It functions in the pathway carbohydrate metabolism; D-tagatose 6-phosphate degradation; D-glyceraldehyde 3-phosphate and glycerone phosphate from D-tagatose 6-phosphate: step 2/2. The chain is Tagatose 1,6-diphosphate aldolase from Listeria monocytogenes serotype 4a (strain HCC23).